The chain runs to 254 residues: MIKPIIVGNWKLNGSKKLIESFLKQLNQFLIKYYKICTVVIAPPVLYSHLIQNMFSSDKKNFFLGAQNIDIHFSGPFTGEISPIMLKDIGIKYVIIGHSERRLNHKETNEIIAKKFCMLKEENLVPILCIGETKKEKIDKKTKDICKKQIDIIFNMYGSNAFDNSIIAYEPIWSIGSGNSAAPKEVQCIAHFIRNYVKSKSNHNIENFFIQYGGSVTKNNAKELIYQKDIDGFLVGGASLQLEEFSKIIEITNI.

Residue 9–11 coordinates substrate; that stretch reads NWK. Catalysis depends on His98, which acts as the Electrophile. The Proton acceptor role is filled by Glu170. Substrate contacts are provided by residues Gly176, Ser215, and 236–237; that span reads GG.

It belongs to the triosephosphate isomerase family. Homodimer.

The protein resides in the cytoplasm. The catalysed reaction is D-glyceraldehyde 3-phosphate = dihydroxyacetone phosphate. It functions in the pathway carbohydrate biosynthesis; gluconeogenesis. The protein operates within carbohydrate degradation; glycolysis; D-glyceraldehyde 3-phosphate from glycerone phosphate: step 1/1. In terms of biological role, involved in the gluconeogenesis. Catalyzes stereospecifically the conversion of dihydroxyacetone phosphate (DHAP) to D-glyceraldehyde-3-phosphate (G3P). The protein is Triosephosphate isomerase of Buchnera aphidicola subsp. Cinara cedri (strain Cc).